The following is a 331-amino-acid chain: Ferrochelatase (331 aa).

Fe cation is bound by residues H187 and E286.

Belongs to the ferrochelatase family.

It localises to the cytoplasm. The enzyme catalyses heme b + 2 H(+) = protoporphyrin IX + Fe(2+). It participates in porphyrin-containing compound metabolism; protoheme biosynthesis; protoheme from protoporphyrin-IX: step 1/1. Functionally, catalyzes the ferrous insertion into protoporphyrin IX. This is Ferrochelatase from Legionella pneumophila (strain Corby).